Here is a 244-residue protein sequence, read N- to C-terminus: Type III pantothenate kinase (244 aa).

Residue 6–13 participates in ATP binding; sequence DVGNTRIK. Residues Y87 and 94–97 contribute to the substrate site; that span reads GIDR. D96 (proton acceptor) is an active-site residue. A K(+)-binding site is contributed by D117. T120 provides a ligand contact to ATP. Residue T172 participates in substrate binding.

Belongs to the type III pantothenate kinase family. In terms of assembly, homodimer. The cofactor is NH4(+). It depends on K(+) as a cofactor.

It localises to the cytoplasm. It catalyses the reaction (R)-pantothenate + ATP = (R)-4'-phosphopantothenate + ADP + H(+). It participates in cofactor biosynthesis; coenzyme A biosynthesis; CoA from (R)-pantothenate: step 1/5. Functionally, catalyzes the phosphorylation of pantothenate (Pan), the first step in CoA biosynthesis. The sequence is that of Type III pantothenate kinase from Flavobacterium johnsoniae (strain ATCC 17061 / DSM 2064 / JCM 8514 / BCRC 14874 / CCUG 350202 / NBRC 14942 / NCIMB 11054 / UW101) (Cytophaga johnsonae).